A 287-amino-acid polypeptide reads, in one-letter code: RNA polymerase sigma factor RpoH (287 aa).

A sigma-70 factor domain-2 region spans residues 54–123 (LILSHLRFVI…IHEYVLRNWR (70 aa)). The Interaction with polymerase core subunit RpoC signature appears at 78–81 (DLIQ). The segment at 230-283 (ALSSLDERSRNIIHARWLDDSDHKMTLREIAHNYGISAERVRQLEKNAMKKLKV) is sigma-70 factor domain-4. Positions 256-275 (LREIAHNYGISAERVRQLEK) form a DNA-binding region, H-T-H motif.

It belongs to the sigma-70 factor family. RpoH subfamily. In terms of assembly, interacts with the RNA polymerase core enzyme.

The protein resides in the cytoplasm. Its function is as follows. Sigma factors are initiation factors that promote the attachment of RNA polymerase to specific initiation sites and are then released. This sigma factor is involved in regulation of expression of heat shock genes. The chain is RNA polymerase sigma factor RpoH from Buchnera aphidicola subsp. Baizongia pistaciae (strain Bp).